The sequence spans 517 residues: DNA primase DnaG (517 aa).

The 87-residue stretch at 171-257 (DAIIILEGRA…CVEDLVQKEV (87 aa)) folds into the Toprim domain. The Mg(2+) site is built by glutamate 177, aspartate 219, and aspartate 221.

This sequence belongs to the archaeal DnaG primase family. Forms a ternary complex with MCM helicase and DNA. Component of the archaeal exosome complex. Mg(2+) serves as cofactor.

It carries out the reaction ssDNA + n NTP = ssDNA/pppN(pN)n-1 hybrid + (n-1) diphosphate.. In terms of biological role, RNA polymerase that catalyzes the synthesis of short RNA molecules used as primers for DNA polymerase during DNA replication. Also part of the exosome, which is a complex involved in RNA degradation. Acts as a poly(A)-binding protein that enhances the interaction between heteromeric, adenine-rich transcripts and the exosome. The sequence is that of DNA primase DnaG from Methanosarcina barkeri (strain Fusaro / DSM 804).